The following is a 204-amino-acid chain: Kunitz type trypsin inhibitor 106 (204 aa).

A signal peptide spans M1–A26. N62 carries an N-linked (GlcNAc...) asparagine glycan. A disulfide bond links C65 and C112. N141 is a glycosylation site (N-linked (GlcNAc...) asparagine). Cystine bridges form between C164–C176 and C169–C172.

This sequence belongs to the protease inhibitor I3 (leguminous Kunitz-type inhibitor) family. Interacts with SCP1 and CP. In terms of tissue distribution, expressed at low levels in non-mycorrhizal roots.

The protein resides in the secreted. Its subcellular location is the extracellular space. It localises to the apoplast. Functionally, protease inhibitor that, together with SCP1, controls mycorrhiza establishment and arbuscule development during root colonization by arbuscular mycorrhizal (AM) fungi (e.g. Rhizophagus irregularis), probably by degrading SCP1 in the apoplast of the periarbuscular region. The sequence is that of Kunitz type trypsin inhibitor 106 from Medicago truncatula (Barrel medic).